Reading from the N-terminus, the 135-residue chain is Lymphocyte antigen 6B (135 aa).

A signal peptide spans 1–26; it reads MNRSCAMKSCVLILLLALLCAERAQG. Residues 27–119 form the UPAR/Ly6 domain; the sequence is LNCYNCTMIP…PTGGSTWTMA (93 aa). 5 disulfides stabilise this stretch: cysteine 29–cysteine 54, cysteine 32–cysteine 41, cysteine 47–cysteine 75, cysteine 79–cysteine 99, and cysteine 100–cysteine 105. Glycine 113 carries GPI-anchor amidated glycine lipidation. Positions 114–135 are cleaved as a propeptide — removed in mature form; it reads STWTMAGVLLFILGSVLLQTLL.

Its subcellular location is the cell membrane. This chain is Lymphocyte antigen 6B (Ly6b), found in Rattus norvegicus (Rat).